We begin with the raw amino-acid sequence, 345 residues long: N-acetyl-gamma-glutamyl-phosphate reductase (345 aa).

The active site involves Cys-149.

The protein belongs to the NAGSA dehydrogenase family. Type 1 subfamily.

Its subcellular location is the cytoplasm. The catalysed reaction is N-acetyl-L-glutamate 5-semialdehyde + phosphate + NADP(+) = N-acetyl-L-glutamyl 5-phosphate + NADPH + H(+). It functions in the pathway amino-acid biosynthesis; L-arginine biosynthesis; N(2)-acetyl-L-ornithine from L-glutamate: step 3/4. Functionally, catalyzes the NADPH-dependent reduction of N-acetyl-5-glutamyl phosphate to yield N-acetyl-L-glutamate 5-semialdehyde. The protein is N-acetyl-gamma-glutamyl-phosphate reductase of Bacillus cytotoxicus (strain DSM 22905 / CIP 110041 / 391-98 / NVH 391-98).